The primary structure comprises 569 residues: Vacuolar protein sorting-associated protein 53 B (569 aa).

Coiled-coil stretches lie at residues 53 to 90 (TRAK…VQDI), 125 to 145 (QVMT…AINE), and 295 to 316 (KEKS…FERE).

The protein belongs to the VPS53 family. Component of the Golgi-associated retrograde protein (GARP) complex.

The protein localises to the cytoplasm. It localises to the golgi apparatus. Its subcellular location is the trans-Golgi network membrane. The protein resides in the endosome membrane. Its function is as follows. Involved in retrograde transport from early and late endosomes to late Golgi, leading to the membrane fusion between late Golgi and endosomal vesicles. This Arabidopsis thaliana (Mouse-ear cress) protein is Vacuolar protein sorting-associated protein 53 B.